Consider the following 399-residue polypeptide: tRNA-specific 2-thiouridylase MnmA (399 aa).

Residues 18 to 25 (AMSGGVDS) and Leu44 contribute to the ATP site. The active-site Nucleophile is the Cys112. Residues Cys112 and Cys213 are joined by a disulfide bond. Gly136 contributes to the ATP binding site. The interaction with tRNA stretch occupies residues 163–165 (RDQ). The active-site Cysteine persulfide intermediate is the Cys213.

The protein belongs to the MnmA/TRMU family.

The protein resides in the cytoplasm. It carries out the reaction S-sulfanyl-L-cysteinyl-[protein] + uridine(34) in tRNA + AH2 + ATP = 2-thiouridine(34) in tRNA + L-cysteinyl-[protein] + A + AMP + diphosphate + H(+). In terms of biological role, catalyzes the 2-thiolation of uridine at the wobble position (U34) of tRNA, leading to the formation of s(2)U34. This is tRNA-specific 2-thiouridylase MnmA from Rhizobium leguminosarum bv. trifolii (strain WSM2304).